The following is an 86-amino-acid chain: Large ribosomal subunit protein bL31B (86 aa).

Belongs to the bacterial ribosomal protein bL31 family. Type B subfamily. Part of the 50S ribosomal subunit.

This Vibrio campbellii (strain ATCC BAA-1116) protein is Large ribosomal subunit protein bL31B.